A 340-amino-acid polypeptide reads, in one-letter code: Ferrochelatase (340 aa).

Residues His189 and Glu292 each coordinate Fe cation.

This sequence belongs to the ferrochelatase family.

The protein localises to the cytoplasm. It catalyses the reaction heme b + 2 H(+) = protoporphyrin IX + Fe(2+). The protein operates within porphyrin-containing compound metabolism; protoheme biosynthesis; protoheme from protoporphyrin-IX: step 1/1. In terms of biological role, catalyzes the ferrous insertion into protoporphyrin IX. The polypeptide is Ferrochelatase (Pseudomonas fluorescens biotype C).